We begin with the raw amino-acid sequence, 210 residues long: Redox-sensing transcriptional repressor Rex (210 aa).

Residues 17–56 constitute a DNA-binding region (H-T-H motif); sequence SYLHLVKKAEADKLEYISGTVIAEELELEPIQVRKDLTIT. Residue 91-96 coordinates NAD(+); sequence GAGSLG.

It belongs to the transcriptional regulatory Rex family. In terms of assembly, homodimer.

It is found in the cytoplasm. Its function is as follows. Modulates transcription in response to changes in cellular NADH/NAD(+) redox state. The sequence is that of Redox-sensing transcriptional repressor Rex from Treponema denticola (strain ATCC 35405 / DSM 14222 / CIP 103919 / JCM 8153 / KCTC 15104).